Consider the following 544-residue polypeptide: Zinc finger and SCAN domain-containing protein 25 (544 aa).

Glycyl lysine isopeptide (Lys-Gly) (interchain with G-Cter in SUMO2) cross-links involve residues Lys-3 and Lys-22. The 83-residue stretch at 42-124 (RLRFRQFRYQ…AMVEDLTERA (83 aa)) folds into the SCAN box domain. A Glycyl lysine isopeptide (Lys-Gly) (interchain with G-Cter in SUMO2) cross-link involves residue Lys-128. Residues 157-189 (VEVKPEWGMPPGEGVQGPDPGTEEQLSQDPGDE) form a disordered region. Residues Lys-278 and Lys-285 each participate in a glycyl lysine isopeptide (Lys-Gly) (interchain with G-Cter in SUMO2) cross-link. 6 consecutive C2H2-type zinc fingers follow at residues 348–370 (FQCP…QRTH), 375–397 (YGCV…QRTH), 403–425 (YVCS…QRSH), 431–453 (YKCG…RRTH), 459–480 (YTCE…RRAH), and 486–508 (YGCQ…QRIH). The segment at 514–536 (YHCPACGRSFNQRSILNRHQKTQ) adopts a C2H2-type 7; degenerate zinc-finger fold.

The protein belongs to the krueppel C2H2-type zinc-finger protein family.

It is found in the nucleus. In terms of biological role, may be involved in transcriptional regulation. This is Zinc finger and SCAN domain-containing protein 25 (ZSCAN25) from Homo sapiens (Human).